Reading from the N-terminus, the 469-residue chain is Pancreatic lipase-related protein 2 (469 aa).

An N-terminal signal peptide occupies residues 1-17 (MLPPWTLGLLLLATVRG). The cysteines at positions 21 and 27 are disulfide-linked. Residues 93–105 (IHGFLDKAEDSWP) form a required for galactolipase activity region. Cys109 and Cys120 form a disulfide bridge. Residue Ser171 is the Nucleophile of the active site. Asp195 functions as the Charge relay system in the catalytic mechanism. Glu206, Arg209, Asp211, and Asp214 together coordinate Ca(2+). A disulfide bridge links Cys256 with Cys280. Positions 257-279 (KKNVLSTITDIDGIWEGIGGFVS) are required for galactolipase activity. The active-site Charge relay system is the His282. Cystine bridges form between Cys304–Cys315 and Cys318–Cys323. Asn353 and Asn428 each carry an N-linked (GlcNAc...) asparagine glycan. The 113-residue stretch at 357–469 (WRYKISVTLS…ENVLQSLYPC (113 aa)) folds into the PLAT domain. Residues Cys453 and Cys469 are joined by a disulfide bond.

Belongs to the AB hydrolase superfamily. Lipase family. Pancreas.

The protein localises to the secreted. It is found in the zymogen granule membrane. It localises to the cell projection. Its subcellular location is the neuron projection. It carries out the reaction a triacylglycerol + H2O = a diacylglycerol + a fatty acid + H(+). The enzyme catalyses a 1,2-diacyl-3-O-(beta-D-galactosyl)-sn-glycerol + 2 H2O = 3-beta-D-galactosyl-sn-glycerol + 2 a fatty acid + 2 H(+). The catalysed reaction is 1,2,3-tri-(9Z-octadecenoyl)-glycerol + H2O = di-(9Z)-octadecenoylglycerol + (9Z)-octadecenoate + H(+). It catalyses the reaction di-(9Z)-octadecenoylglycerol + H2O = (9Z-octadecenoyl)-glycerol + (9Z)-octadecenoate + H(+). It carries out the reaction (9Z-octadecenoyl)-glycerol + H2O = glycerol + (9Z)-octadecenoate + H(+). The enzyme catalyses 1-(9Z-octadecenoyl)-glycerol + H2O = glycerol + (9Z)-octadecenoate + H(+). The catalysed reaction is 1,2,3-tripropanoylglycerol + H2O = dipropanoylglycerol + propanoate + H(+). It catalyses the reaction 1,2,3-tributanoylglycerol + H2O = dibutanoylglycerol + butanoate + H(+). It carries out the reaction 1,2,3-trioctanoylglycerol + H2O = dioctanoylglycerol + octanoate + H(+). The enzyme catalyses 1,2-didecanoylglycerol + H2O = decanoylglycerol + decanoate + H(+). The catalysed reaction is long chain 1,2-diacyl-3-O-beta-D-galactosyl-sn-glycerol + H2O = long chain acyl-3-O-beta-D-galactosyl-sn-glycerol + a fatty acid + H(+). It catalyses the reaction 1,2-dioctanoyl-3-O-beta-D-galactosyl-sn-glycerol + H2O = octanoyl-3-(beta-D-galactosyl)-sn-glycerol + octanoate + H(+). It carries out the reaction 1,2-didodecanoyl-3-beta-D-galactosyl-sn-glycerol + H2O = dodecanoyl-3-beta-D-galactosyl-sn-glycerol + dodecanoate + H(+). The enzyme catalyses 1-beta-D-galactosyl-2,3-didodecanoyl-sn-glycerol + H2O = 1-beta-D-galactosyl-dodecanoyl-sn-glycerol + dodecanoate + H(+). The catalysed reaction is a 1,2-diacyl-3-O-[alpha-D-galactosyl-(1-&gt;6)-beta-D-galactosyl]-sn-glycerol + H2O = acyl-3-O-[alpha-D-galactosyl-(1-&gt;6)-beta-D-galactosyl]-sn-glycerol + a fatty acid + H(+). It catalyses the reaction long chain 1,2-diacyl-3-O-[alpha-D-galactosyl-(1-&gt;6)-beta-D-galactosyl]-sn-glycerol + H2O = long chain acyl-3-O-[alpha-D-galactosyl-(1-&gt;6)-beta-D-galactosyl]-sn-glycerol + a fatty acid + H(+). It carries out the reaction 1,2-dioctanoyl-3-O-[alpha-D-galactosyl-(1-&gt;6)-beta-D-galactosyl]-sn-glycerol + H2O = octanoyl-3-O-[alpha-D-galactosyl-(1-&gt;6)-beta-D-galactosyl]-sn-glycerol + octanoate + H(+). The enzyme catalyses 1,2-didodecanoyl-3-O-[alpha-D-galactosyl-(1-&gt;6)-beta-D-galactosyl]-sn-glycerol + H2O = dodecanoyl-3-O-[alpha-D-galactosyl-(1-&gt;6)-beta-D-galactosyl]-sn-glycerol + dodecanoate + H(+). The catalysed reaction is a 1,2-diacyl-sn-glycero-3-phosphocholine + H2O = a monoacyl-sn-glycero-3-phosphocholine + a fatty acid + H(+). It participates in glycerolipid metabolism; triacylglycerol degradation. The protein operates within glycolipid metabolism. With respect to regulation, regulated by CLPS and bile salts levels ranging 1-5 mM in neonates and 2-30 mM in healthy adults. CLPS stimulates milk fat digestion in the presence of 4 mM bile salts. Triacylglycerol lipase activity toward short- and medium-chain triglycerides is inhibited by increasing concentrations of bile salts and weakly reactivated by CLPS. Optimal triacylglycerol lipase activity is reached at bile salts concentrations ranging from 0.1 to 0.5 mM and then decreases at concentrations higher than 1 mM. Lipase activity toward long-chain glycerolipids is stimulated by CLPS in the presence of 4 mM bile salts. Galactolipase activity is inhibited at high concentrations of bile salts. Triacylglycerol lipase activity is inhibited by anti-obesity drug tetrahydrolipstatin. Lipase that primarily hydrolyzes triglycerides and galactosylglycerides. In neonates, may play a major role in pancreatic digestion of dietary fats such as milk fat globules enriched in long-chain triglycerides. Hydrolyzes short-, medium- and long-chain fatty acyls in triglycerides without apparent positional specificity. Can completely deacylate triacylglycerols. When the liver matures and bile salt synthesis increases, likely functions mainly as a galactolipase and monoacylglycerol lipase. Hydrolyzes monogalactosyldiglycerols (MGDG) and digalactosyldiacylglycerols (DGDG) present in a plant-based diet, releasing long-chain polyunsaturated fatty acids. Hydrolyzes medium- and long-chain fatty acyls in galactolipids. May act together with LIPF to hydrolyze partially digested triglycerides. Hydrolyzes long-chain monoglycerides with high efficiency. In cytotoxic T cells, contributes to perforin-dependent cell lysis, but is unlikely to mediate direct cytotoxicity. Also has low phospholipase activity. In neurons, required for the localization of the phospholipid 1-oleoyl-2-palmitoyl-PC (OPPC) to neurite tips through acyl chain remodeling of membrane phospholipids. The resulting OPPC-rich lipid membrane domain recruits the t-SNARE protein STX4 by selectively interacting with the STX4 transmembrane domain and this promotes surface expression of the dopamine transporter SLC6A3/DAT at neurite tips by facilitating fusion of SLC6A3-containing transport vesicles with the plasma membrane. The polypeptide is Pancreatic lipase-related protein 2 (Homo sapiens (Human)).